The following is a 246-amino-acid chain: Probable transcriptional regulatory protein RB5500 (246 aa).

It belongs to the TACO1 family.

Its subcellular location is the cytoplasm. In Rhodopirellula baltica (strain DSM 10527 / NCIMB 13988 / SH1), this protein is Probable transcriptional regulatory protein RB5500.